A 488-amino-acid polypeptide reads, in one-letter code: Glutamyl-tRNA(Gln) amidotransferase subunit A (488 aa).

Residues Lys-77 and Ser-152 each act as charge relay system in the active site. Ser-176 (acyl-ester intermediate) is an active-site residue.

Belongs to the amidase family. GatA subfamily. In terms of assembly, heterotrimer of A, B and C subunits.

It carries out the reaction L-glutamyl-tRNA(Gln) + L-glutamine + ATP + H2O = L-glutaminyl-tRNA(Gln) + L-glutamate + ADP + phosphate + H(+). In terms of biological role, allows the formation of correctly charged Gln-tRNA(Gln) through the transamidation of misacylated Glu-tRNA(Gln) in organisms which lack glutaminyl-tRNA synthetase. The reaction takes place in the presence of glutamine and ATP through an activated gamma-phospho-Glu-tRNA(Gln). The sequence is that of Glutamyl-tRNA(Gln) amidotransferase subunit A from Streptococcus pyogenes serotype M18 (strain MGAS8232).